The sequence spans 339 residues: MKDSLVLQSRVPAHPDSRCWFLAWNPSGTLLASCGGDRKIRIWGTEGDSWICKSVLSEGHQRTVRKVAWSPCGNYLASASFDATTCIWKKNQDDFECVTTLEGHENEVKSVAWAPSGNLLATCSRDKSVWVWEVDEEDEYECVSVLSSHTQDVKHVVWHPSQELLASASYDDTVKLYQEEGDDWVCCATLEGHESTVWSIAFDPSGQRLASCSDDRTVRIWRQYLPGNEQGVACSGSDPSWKCICTLSGFHTRTIYDVAWCQLTGALATACGDDAIRVFEEDPGSDPQQPTFSLTAHLRQAHSQDVNCVAWNPKEPGLLASCSDDGEVAFWEYHQPAGL.

WD repeat units lie at residues 14–53 (HPDS…WICK), 59–98 (GHQR…FECV), 103–142 (GHEN…EYEC), 148–187 (SHTQ…WVCC), 192–231 (GHES…NEQG), 250–289 (FHTR…DPQQ), and 301–339 (AHSQ…PAGL). An LYR motif; required for interaction with HSC20 motif is present at residues 176-178 (LYQ).

It belongs to the WD repeat CIA1 family. As to quaternary structure, component of the CIA complex. Interacts with CIAO2A and forms a complex with CIAO2B and MMS19; the interactions with CIAO2A and CIAO2B are mutually exclusive. Interacts with CHD1L, ERCC2, IREB2 and POLD1. Component of the MMXD complex, which includes CIAO1, ERCC2, CIAO2B, MMS19 and SLC25A5. Interacts with WT1. Interacts with CIAO3. Interacts (via LYR motif) with HSC20.

The protein resides in the cytoplasm. Key component of the cytosolic iron-sulfur protein assembly (CIA) complex, a multiprotein complex that mediates the incorporation of iron-sulfur cluster into extramitochondrial Fe/S proteins. As a CIA complex component, interacts specifically with CIAO2A or CIAO2B and MMS19 to assist different branches of iron-sulfur protein assembly, depending of its interactors. The complex CIAO1:CIAO2B:MMS19 binds to and facilitates the assembly of most cytosolic-nuclear Fe/S proteins. CIAO1:CIAO2A specifically matures ACO1 and stabilizes IREB2. Seems to specifically modulate the transactivation activity of WT1. As part of the mitotic spindle-associated MMXD complex it may play a role in chromosome segregation. In Mus musculus (Mouse), this protein is Probable cytosolic iron-sulfur protein assembly protein CIAO1.